Here is a 265-residue protein sequence, read N- to C-terminus: Phosphonates import ATP-binding protein PhnC 1 (265 aa).

The 245-residue stretch at 3–247 folds into the ABC transporter domain; the sequence is LRLSGIELRH…HLDTLYANEQ (245 aa). 36–43 contacts ATP; it reads GPSGAGKT. Residues 245–265 are disordered; it reads NEQLSPQPAPDVSETPWTPRC.

Belongs to the ABC transporter superfamily. Phosphonates importer (TC 3.A.1.9.1) family. The complex is composed of two ATP-binding proteins (PhnC), two transmembrane proteins (PhnE) and a solute-binding protein (PhnD).

It is found in the cell inner membrane. The catalysed reaction is phosphonate(out) + ATP + H2O = phosphonate(in) + ADP + phosphate + H(+). Its function is as follows. Part of the ABC transporter complex PhnCDE involved in phosphonates import. Responsible for energy coupling to the transport system. The sequence is that of Phosphonates import ATP-binding protein PhnC 1 from Pseudomonas savastanoi pv. phaseolicola (strain 1448A / Race 6) (Pseudomonas syringae pv. phaseolicola (strain 1448A / Race 6)).